Here is a 373-residue protein sequence, read N- to C-terminus: Cobalt-precorrin-5B C(1)-methyltransferase (373 aa).

Belongs to the CbiD family.

It carries out the reaction Co-precorrin-5B + S-adenosyl-L-methionine = Co-precorrin-6A + S-adenosyl-L-homocysteine. It participates in cofactor biosynthesis; adenosylcobalamin biosynthesis; cob(II)yrinate a,c-diamide from sirohydrochlorin (anaerobic route): step 6/10. Catalyzes the methylation of C-1 in cobalt-precorrin-5B to form cobalt-precorrin-6A. The protein is Cobalt-precorrin-5B C(1)-methyltransferase of Listeria monocytogenes serovar 1/2a (strain ATCC BAA-679 / EGD-e).